A 1190-amino-acid chain; its full sequence is Phosphatidylinositol-3,5-bisphosphate 3-phosphatase MTMR4 (1190 aa).

At Ser8 the chain carries Phosphoserine. In terms of domain architecture, Myotubularin phosphatase spans 153–570 (EHIRCRQEAE…RALHLWTAVY (418 aa)). A 1,2-diacyl-sn-glycero-3-phospho-(1D-myo-inositol-3,5-bisphosphate)-binding residues include Asn320, Asn345, and Ile346. Asn320, Asn345, and Ile346 together coordinate a 1,2-diacyl-sn-glycero-3-phospho-(1D-myo-inositol-3-phosphate). Cys407 acts as the Phosphocysteine intermediate in catalysis. A 1,2-diacyl-sn-glycero-3-phospho-(1D-myo-inositol-3,5-bisphosphate) contacts are provided by Ser408, Asp409, Gly410, Trp411, Asp412, Arg413, Lys449, and Arg453. A 1,2-diacyl-sn-glycero-3-phospho-(1D-myo-inositol-3-phosphate) is bound by residues Ser408, Asp409, Gly410, Trp411, Asp412, and Arg413. Residue Arg453 coordinates a 1,2-diacyl-sn-glycero-3-phospho-(1D-myo-inositol-3-phosphate). Ser610 and Ser629 each carry phosphoserine. Disordered regions lie at residues 616–694 (SACD…FKGH), 724–749 (ETEA…GKPP), and 773–848 (DFPE…PSSV). The span at 618–637 (CDTSSPLTRTSSDPNLNNHS) shows a compositional bias: polar residues. Residues 782 to 847 (LTGTPQQPHL…SISHQEQPSS (66 aa)) are compositionally biased toward polar residues. The PY-motif; substrate motif for NEDD4 motif lies at 999 to 1003 (VPPLY). Residues 1020–1052 (LRQIEAGYRQEVEQLRRQVRELQMRLDIRHCCA) are a coiled coil. The segment at 1109–1169 (DHMASHCFNC…VCNSCYEHIQ (61 aa)) adopts an FYVE-type zinc-finger fold. 8 residues coordinate Zn(2+): Cys1115, Cys1118, Cys1131, Cys1134, Cys1139, Cys1142, Cys1161, and Cys1164.

This sequence belongs to the protein-tyrosine phosphatase family. Non-receptor class myotubularin subfamily. In terms of assembly, homooligomeric. Forms MTMR3:MTMR4 heterooligomers; regulates the localization of both proteins. The MTMR3:MTMR4 heterooligomer can also recruit both CEP55 and PLK1; occurs during early mitosis, regulates the phosphorylation of CEP55 by PLK1 and its recruitment to the midbody where it can mediate cell abscission. Interacts with SMAD2 and SMAD3; negatively regulates TGF-beta signaling through SMAD2 and SMAD3 dephosphorylation and retention in endosomes. Interacts with SMAD1; negatively regulates BMP signaling through SMAD1 dephosphorylation and retention in endosomes. Ubiquitinated. Ubiquitination by NEDD4 probably leads to proteasomal degradation. Post-translationally, phosphorylated by CDK1 during mitosis.

It is found in the early endosome membrane. Its subcellular location is the recycling endosome membrane. It localises to the late endosome membrane. The protein localises to the cytoplasmic vesicle. The protein resides in the phagosome membrane. It catalyses the reaction a 1,2-diacyl-sn-glycero-3-phospho-(1D-myo-inositol-3-phosphate) + H2O = a 1,2-diacyl-sn-glycero-3-phospho-(1D-myo-inositol) + phosphate. The enzyme catalyses a 1,2-diacyl-sn-glycero-3-phospho-(1D-myo-inositol-3,5-bisphosphate) + H2O = a 1,2-diacyl-sn-glycero-3-phospho-(1D-myo-inositol-5-phosphate) + phosphate. The catalysed reaction is 1,2-dioctanoyl-sn-glycero-3-phospho-(1-D-myo-inositol-3-phosphate) + H2O = 1,2-dioctanoyl-sn-glycero-3-phospho-(1D-myo-inositol) + phosphate. It carries out the reaction 1,2-dioctanoyl-sn-glycero-3-phospho-(1D-myo-inositol-3,5-bisphosphate) + H2O = 1,2-dioctanoyl-sn-glycero-3-phospho-(1D-myo-inositol-5-phosphate) + phosphate. Its function is as follows. Lipid phosphatase that specifically dephosphorylates the D-3 position of phosphatidylinositol 3-phosphate and phosphatidylinositol 3,5-bisphosphate, generating phosphatidylinositol and phosphatidylinositol 5-phosphate. Decreases the levels of phosphatidylinositol 3-phosphate, a phospholipid found in cell membranes where it acts as key regulator of both cell signaling and intracellular membrane traffic, in a subset of endosomal membranes to negatively regulate both endocytic recycling and trafficking and/or maturation of endosomes toward lysosomes. Through phosphatidylinositol 3-phosphate turnover in phagosome membranes regulates phagocytosis and phagosome maturation. By decreasing phosphatidylinositol 3-monophosphate (PI3P) levels in immune cells it can also regulate the innate immune response. Beside its lipid phosphatase activity, can also function as a molecular adapter to regulate midbody abscission during mitotic cytokinesis. Can also negatively regulate TGF-beta and BMP signaling through Smad proteins dephosphorylation and retention in endosomes. In Mus musculus (Mouse), this protein is Phosphatidylinositol-3,5-bisphosphate 3-phosphatase MTMR4.